The following is a 144-amino-acid chain: MSRRQARERALQILFQVDVGGADPGEAFRLMDEGFGELKKYQEFARLLVGGTLENLAAIDRVIAGVSKDWNINRMANVDRNIIRMALYEIFFCEDIPYSVSVNEAVELGKTYGGEESGRFINGILGRIVESPEEYRPLIKGSAS.

The protein belongs to the NusB family.

Involved in transcription antitermination. Required for transcription of ribosomal RNA (rRNA) genes. Binds specifically to the boxA antiterminator sequence of the ribosomal RNA (rrn) operons. The sequence is that of Transcription antitermination protein NusB from Pelotomaculum thermopropionicum (strain DSM 13744 / JCM 10971 / SI).